We begin with the raw amino-acid sequence, 469 residues long: Trigger factor (469 aa).

The 80-residue stretch at 166–245 folds into the PPIase FKBP-type domain; the sequence is GDFLTIDITA…VKSVKERELP (80 aa). Residues 430 to 469 form a disordered region; it reads GGEEEAAEAEAAPAVDSDAVEGEAATEEAAPSDDPAAVKF.

It belongs to the FKBP-type PPIase family. Tig subfamily.

Its subcellular location is the cytoplasm. The enzyme catalyses [protein]-peptidylproline (omega=180) = [protein]-peptidylproline (omega=0). Functionally, involved in protein export. Acts as a chaperone by maintaining the newly synthesized protein in an open conformation. Functions as a peptidyl-prolyl cis-trans isomerase. This chain is Trigger factor, found in Arthrobacter sp. (strain FB24).